A 1191-amino-acid polypeptide reads, in one-letter code: WASH complex subunit homolog 5 (1191 aa).

This sequence belongs to the strumpellin family. In terms of assembly, component of the WASH complex.

The protein localises to the early endosome. Functionally, acts at least in part as component of the WASH complex which may regulate wash nucleation-promoting factor (NPF) activity and is required for its membrane targeting during endosomal sorting. During embryogenesis, not involved in the wash-dependent developmental migration of hemocytes anteriorly from the tail. This chain is WASH complex subunit homolog 5, found in Drosophila melanogaster (Fruit fly).